The primary structure comprises 471 residues: 3-isopropylmalate dehydratase large subunit (471 aa).

Cys-349, Cys-409, and Cys-412 together coordinate [4Fe-4S] cluster.

It belongs to the aconitase/IPM isomerase family. LeuC type 1 subfamily. In terms of assembly, heterodimer of LeuC and LeuD. [4Fe-4S] cluster serves as cofactor.

It catalyses the reaction (2R,3S)-3-isopropylmalate = (2S)-2-isopropylmalate. It functions in the pathway amino-acid biosynthesis; L-leucine biosynthesis; L-leucine from 3-methyl-2-oxobutanoate: step 2/4. Its function is as follows. Catalyzes the isomerization between 2-isopropylmalate and 3-isopropylmalate, via the formation of 2-isopropylmaleate. In Aliivibrio fischeri (strain ATCC 700601 / ES114) (Vibrio fischeri), this protein is 3-isopropylmalate dehydratase large subunit.